The primary structure comprises 365 residues: Probable dual-specificity RNA methyltransferase RlmN (365 aa).

The active-site Proton acceptor is the Glu-99. The region spanning 105–344 (QSYGLSVCVT…CVVRQEHGTD (240 aa)) is the Radical SAM core domain. A disulfide bridge connects residues Cys-112 and Cys-349. [4Fe-4S] cluster contacts are provided by Cys-119, Cys-123, and Cys-126. S-adenosyl-L-methionine is bound by residues 171–172 (GE), Ser-203, 227–229 (SLH), and Asn-305. The S-methylcysteine intermediate role is filled by Cys-349.

This sequence belongs to the radical SAM superfamily. RlmN family. Requires [4Fe-4S] cluster as cofactor.

The protein localises to the cytoplasm. It catalyses the reaction adenosine(2503) in 23S rRNA + 2 reduced [2Fe-2S]-[ferredoxin] + 2 S-adenosyl-L-methionine = 2-methyladenosine(2503) in 23S rRNA + 5'-deoxyadenosine + L-methionine + 2 oxidized [2Fe-2S]-[ferredoxin] + S-adenosyl-L-homocysteine. The catalysed reaction is adenosine(37) in tRNA + 2 reduced [2Fe-2S]-[ferredoxin] + 2 S-adenosyl-L-methionine = 2-methyladenosine(37) in tRNA + 5'-deoxyadenosine + L-methionine + 2 oxidized [2Fe-2S]-[ferredoxin] + S-adenosyl-L-homocysteine. Its function is as follows. Specifically methylates position 2 of adenine 2503 in 23S rRNA and position 2 of adenine 37 in tRNAs. This Lactococcus lactis subsp. cremoris (strain SK11) protein is Probable dual-specificity RNA methyltransferase RlmN.